The sequence spans 1013 residues: Dichlorochromopyrrolate synthase (1013 aa).

This sequence belongs to the RebD family. As to quaternary structure, homodimer. It depends on heme as a cofactor.

It catalyses the reaction 2 3-(7-chloroindol-3-yl)-2-iminopropanoate + H2O2 = dichlorochromopyrrolate + NH4(+) + 2 H2O + H(+). The enzyme catalyses 2 2-iminio-3-(indol-3-yl)propanoate + H2O2 = chromopyrrolate + NH4(+) + 2 H2O + H(+). It carries out the reaction 2 H2O2 = O2 + 2 H2O. Involved in the biosynthesis of the indolocarbazole antitumor agent rebeccamycin. Catalyzes the hydrogen peroxide-dependent dimerization of two L-tryptophan-derived molecules (imine form of indole 3-pyruvate (IPA)), to form dichlorochromopyrrolic acid (CPA), the precursor for the six-ring bisindolopyrrolocarbazole scaffold of the rebeccamycin. The hydrogen peroxide is provided together with iminoindolpropanoate by RebO. Due to the instability of indole 3-pyruvate (IPA), which is hydrolyzed in solution and exits in equilibrium with the predominant ketone form of IPA, the concerted functioning of the RebO/RebD system appears to prevent the buildup of significant amounts of IPA and its imine in solution, effectively shepherding the imine further down the biosynthetic chain. The sequence is that of Dichlorochromopyrrolate synthase (rebD) from Lentzea aerocolonigenes (Lechevalieria aerocolonigenes).